The primary structure comprises 169 residues: Neurotensin/neuromedin N (169 aa).

Residues M1–C22 form the signal peptide.

Belongs to the neurotensin family. In terms of assembly, interacts with NTSR1. Interacts with SORT1. Interacts with SORL1. Neurotensin is cleaved and degraded by Angiotensin-converting enzyme (ACE) and neprilysin (MME).

It is found in the secreted. It localises to the cytoplasmic vesicle. The protein localises to the secretory vesicle. Functionally, neurotensin may play an endocrine or paracrine role in the regulation of fat metabolism. It causes contraction of smooth muscle. The chain is Neurotensin/neuromedin N (Nts) from Mus musculus (Mouse).